The following is a 128-amino-acid chain: uncharacterized protein (128 aa).

The interval 25-61 (LPNRLPEGSTVGPKPDSSWEAGSQGNWGLTSSGAGQD) is disordered. Positions 44–61 (EAGSQGNWGLTSSGAGQD) are enriched in polar residues.

This is an uncharacterized protein from Homo sapiens (Human).